A 360-amino-acid chain; its full sequence is Glutamate 5-kinase (360 aa).

K7 is an ATP binding site. 3 residues coordinate substrate: S47, D134, and N146. ATP-binding positions include 166–167 (TD) and 210–216 (TGGISTK). Residues 275 to 356 (VGKITLDDGA…SSIIVVHRDV (82 aa)) form the PUA domain.

This sequence belongs to the glutamate 5-kinase family.

Its subcellular location is the cytoplasm. It catalyses the reaction L-glutamate + ATP = L-glutamyl 5-phosphate + ADP. It participates in amino-acid biosynthesis; L-proline biosynthesis; L-glutamate 5-semialdehyde from L-glutamate: step 1/2. Its function is as follows. Catalyzes the transfer of a phosphate group to glutamate to form L-glutamate 5-phosphate. This chain is Glutamate 5-kinase, found in Prochlorococcus marinus (strain AS9601).